Consider the following 255-residue polypeptide: ATP synthase subunit a (255 aa).

A propeptide spans 1–6 (MNFIIN) (removed in mature form). Helical transmembrane passes span 32–52 (LTSF…FSIL), 91–111 (LFPF…VSLV), 121–141 (LIWT…TGLA), 159–200 (PLVP…LAGL), and 219–251 (LSIL…IKDA).

As to quaternary structure, F-type ATP synthases have 2 components, the catalytic core F(1) and the membrane-embedded component F(0), linked together by a central stalk and a peripheral stalk. The central stalk, also called rotor shaft, is often seen as part of F(1). The peripheral stalk is seen as part of F(0). F(0) contains the membrane channel next to the rotor. F-type ATP synthases form dimers but each monomer functions independently in ATP generation. The dimer consists of 17 different polypeptides: ATP1 (subunit alpha, 3 molecules per monomer, part of F(1)), ATP2 (subunit beta, 3 copies per monomer, part of F(1)), ATP3 (subunit gamma, part of the central stalk), ATP4 (subunit b, part of the peripheral stalk), ATP5/OSCP (subunit 5/OSCP, part of the peripheral stalk), ATP6 (subunit a, part of the peripheral stalk), ATP7 (subunit d, part of the peripheral stalk), ATP8 (subunit 8, part of the peripheral stalk), OLI1 (subunit c, part of the rotor, 10 molecules per monomer), ATP14 (subunit h, part of the peripheral stalk), ATP15 (subunit epsilon, part of the central stalk), ATP16 (subunit delta, part of the central stalk), ATP17 (subunit f, part of the peripheral stalk), ATP18 (subunit i/j, part of the peripheral stalk), ATP19 (subunit k, dimer-specific, at interface between monomers), ATP20 (subunit g, at interface between monomers), TIM11 (subunit e, at interface between monomers).

The protein localises to the mitochondrion inner membrane. Mitochondrial membrane ATP synthase (F(1)F(0) ATP synthase or Complex V) produces ATP from ADP in the presence of a proton gradient across the membrane which is generated by electron transport complexes of the respiratory chain. F-type ATP synthases consist of two structural domains, F(1) - containing the extramembraneous catalytic core, and F(0) - containing the membrane proton channel, linked together by a central stalk and a peripheral stalk. During catalysis, ATP synthesis in the catalytic domain of F(1) is coupled via a rotary mechanism of the central stalk subunits to proton translocation. Key component of the proton channel; it may play a direct role in the translocation of protons across the membrane. The sequence is that of ATP synthase subunit a from Yarrowia lipolytica (strain CLIB 122 / E 150) (Yeast).